The following is a 664-amino-acid chain: Cyclic nucleotide-gated channel alpha-2 (664 aa).

Polar residues predominate over residues methionine 1–valine 20. The interval methionine 1–glutamate 49 is disordered. The Cytoplasmic portion of the chain corresponds to methionine 1–leucine 144. Residues phenylalanine 145 to aspartate 166 form a helical membrane-spanning segment. The Extracellular segment spans residues leucine 167–leucine 176. A helical membrane pass occupies residues valine 177 to glycine 197. At phenylalanine 198 to lysine 222 the chain is on the cytoplasmic side. A helical membrane pass occupies residues leucine 223–histidine 241. Over asparagine 242 to arginine 246 the chain is Extracellular. The helical transmembrane segment at phenylalanine 247–threonine 265 threads the bilayer. The Cytoplasmic segment spans residues arginine 266 to isoleucine 272. The interval proline 270–methionine 378 is ion conduction pathway. Residues phenylalanine 273 to isoleucine 296 form a helical membrane-spanning segment. Residues serine 297–tyrosine 319 lie on the Extracellular side of the membrane. 2 helical membrane passes run leucine 320–isoleucine 354 and phenylalanine 355–asparagine 379. Positions threonine 337–glutamate 340 are selectivity filter. The C-linker stretch occupies residues alanine 380 to glutamine 456. The Cytoplasmic portion of the chain corresponds to alanine 380–proline 664. A cyclic nucleotide-binding domain region spans residues alanine 460 to lysine 580. Glycine 520, serine 523, arginine 536, and threonine 537 together coordinate 3',5'-cyclic GMP. Positions 536 and 537 each coordinate 3',5'-cyclic AMP. Positions valine 597–aspartate 651 form a coiled coil. The tract at residues threonine 644–proline 664 is disordered.

It belongs to the cyclic nucleotide-gated cation channel (TC 1.A.1.5) family. CNGA2 subfamily. As to quaternary structure, the olfactory cyclic nucleotide-gated channel is an heterotetramer composed of CNGA2, CNGA4 and CNGB1b subunits with 2:1:1 stoichiometry.

The protein resides in the cell projection. Its subcellular location is the cilium membrane. It catalyses the reaction Ca(2+)(in) = Ca(2+)(out). It carries out the reaction Na(+)(in) = Na(+)(out). The enzyme catalyses K(+)(in) = K(+)(out). The catalysed reaction is NH4(+)(in) = NH4(+)(out). It catalyses the reaction Rb(+)(in) = Rb(+)(out). It carries out the reaction Li(+)(in) = Li(+)(out). The enzyme catalyses Cs(+)(in) = Cs(+)(out). Pore-forming subunit of the olfactory cyclic nucleotide-gated channel. Operates in the cilia of olfactory sensory neurons where chemical stimulation of the odorant is converted to an electrical signal. Mediates odorant-induced cAMP-dependent Ca(2+) influx triggering neuron depolarization. The rise of intracellular Ca(2+) levels potentiates the olfactory response by activating Ca(2+)-dependent Cl(-) channels, but it also serves as a negative feedback signal to desensitize the channel for rapid adaptation to odorants. Conducts cAMP- and cGMP-gated ion currents, with permeability for monovalent and divalent cations. This chain is Cyclic nucleotide-gated channel alpha-2, found in Oryctolagus cuniculus (Rabbit).